The following is a 436-amino-acid chain: Trigger factor (436 aa).

The PPIase FKBP-type domain maps to Gly164–Pro249.

The protein belongs to the FKBP-type PPIase family. Tig subfamily.

The protein localises to the cytoplasm. The catalysed reaction is [protein]-peptidylproline (omega=180) = [protein]-peptidylproline (omega=0). Its function is as follows. Involved in protein export. Acts as a chaperone by maintaining the newly synthesized protein in an open conformation. Functions as a peptidyl-prolyl cis-trans isomerase. This is Trigger factor from Limosilactobacillus reuteri (strain DSM 20016) (Lactobacillus reuteri).